The sequence spans 388 residues: MTGCCTVLGAFLFEYDTPRIVLIRSRKVGLMNRTVQLLILAYVIGWVFVWEKGYQETDSVVSSVTVKAKGVTMTNTSKLGFRIWDVADYVIPAQEENSVFIMTNMVITMNQTQGLCPEIPGKTTVCETDANCTAGSAGTHSSGVATGRCVSFNGTLKTCEVAAWCPVEDDTEVPKPAFLKAAENFTLLVKNNIWYPKFNFSKRNILPNITTAYLKTCIYDAKTDPFCPIFRLGKIVESAGHSFQDIAIEGGIMGIQIKWNCNLDRAASFCLPRYSFRRLDTRDLAHNVSPGYNFRFAKYYSDLKGAEHRTLIKAYGIRFDIIVFGKAGKFDIIPTMINIGSGLALLGVATVLCDVIVLYCMKKRYYYREKKYKYVEDYEQGLGNQMEQ.

Topologically, residues 1-33 (MTGCCTVLGAFLFEYDTPRIVLIRSRKVGLMNR) are cytoplasmic. A helical transmembrane segment spans residues 34-54 (TVQLLILAYVIGWVFVWEKGY). Residues 55-338 (QETDSVVSSV…KFDIIPTMIN (284 aa)) are Extracellular-facing. Positions 67 and 69 each coordinate ATP. 2 residues coordinate CTP: K67 and K69. Residues N75, N110, N131, N153, and N184 are each glycosylated (N-linked (GlcNAc...) asparagine). Cystine bridges form between C116–C165, C126–C149, and C132–C159. Positions 186 and 188 each coordinate ATP. CTP is bound at residue T186. N-linked (GlcNAc...) asparagine glycans are attached at residues N199 and N208. Intrachain disulfides connect C217-C227 and C261-C270. 3 residues coordinate ATP: N293, R295, and K313. CTP is bound by residues N293, R295, and K313. Residues 339-359 (IGSGLALLGVATVLCDVIVLY) form a helical membrane-spanning segment. Over 360–388 (CMKKRYYYREKKYKYVEDYEQGLGNQMEQ) the chain is Cytoplasmic.

This sequence belongs to the P2X receptor family. As to quaternary structure, functional P2RXs are organized as homomeric and heteromeric trimers. Forms heterotrimer with P2RX1. Interacts with P2RX7 (via C-terminus); this interaction is functional only in the presence of ATP. Forms heterotrimer with P2RX4; functional differences between homomeric P2RX4 and P2RX4/6 heterotrimer are minor. Interacts with AP1M2.

It localises to the cell membrane. It is found in the lysosome membrane. It carries out the reaction K(+)(in) = K(+)(out). The enzyme catalyses Na(+)(in) = Na(+)(out). The catalysed reaction is Ca(2+)(in) = Ca(2+)(out). With respect to regulation, activated by ATP. pH-dependent and inhibited by acidic pH. Functionally, ATP-gated nonselective transmembrane cation channel permeable to potassium, sodium and calcium. CTP, but not GTP or UTP, functions as a weak affinity agonist for P2RX4. Activated by extracellularly released ATP, it plays multiple role in immunity and central nervous system physiology. Could also function as an ATP-gated cation channel of lysosomal membranes. This is P2X purinoceptor 4 (P2RX4) from Bos taurus (Bovine).